We begin with the raw amino-acid sequence, 145 residues long: Large ribosomal subunit protein uL13 (145 aa).

It belongs to the universal ribosomal protein uL13 family. As to quaternary structure, part of the 50S ribosomal subunit.

This protein is one of the early assembly proteins of the 50S ribosomal subunit, although it is not seen to bind rRNA by itself. It is important during the early stages of 50S assembly. This Staphylococcus haemolyticus (strain JCSC1435) protein is Large ribosomal subunit protein uL13.